The following is a 120-amino-acid chain: UPF0231 protein NT01EI_0766 (120 aa).

Belongs to the UPF0231 family.

This Edwardsiella ictaluri (strain 93-146) protein is UPF0231 protein NT01EI_0766.